The following is a 330-amino-acid chain: Phosphate acyltransferase (330 aa).

The protein belongs to the PlsX family. Homodimer. Probably interacts with PlsY.

The protein resides in the cytoplasm. The enzyme catalyses a fatty acyl-[ACP] + phosphate = an acyl phosphate + holo-[ACP]. It participates in lipid metabolism; phospholipid metabolism. Functionally, catalyzes the reversible formation of acyl-phosphate (acyl-PO(4)) from acyl-[acyl-carrier-protein] (acyl-ACP). This enzyme utilizes acyl-ACP as fatty acyl donor, but not acyl-CoA. This is Phosphate acyltransferase from Streptococcus pneumoniae (strain 70585).